Reading from the N-terminus, the 346-residue chain is B3 domain-containing protein At3g25182 (346 aa).

Residues Lys-168 to Ala-187 are disordered. Positions Phe-237–Ser-338 form a DNA-binding region, TF-B3.

It is found in the nucleus. This chain is B3 domain-containing protein At3g25182, found in Arabidopsis thaliana (Mouse-ear cress).